A 215-amino-acid polypeptide reads, in one-letter code: Cytochrome b6 (215 aa).

A helical membrane pass occupies residues 32–52 (IFYCLGGITLTCFLVQIATGF). Cys35 contacts heme c. His86 and His100 together coordinate heme b. 3 consecutive transmembrane segments (helical) span residues 90–110 (ASMM…TGGF), 116–136 (LTWV…VTGY), and 186–206 (LHTF…FLMI). Positions 187 and 202 each coordinate heme b.

The protein belongs to the cytochrome b family. PetB subfamily. The 4 large subunits of the cytochrome b6-f complex are cytochrome b6, subunit IV (17 kDa polypeptide, PetD), cytochrome f and the Rieske protein, while the 4 small subunits are PetG, PetL, PetM and PetN. The complex functions as a dimer. It depends on heme b as a cofactor. The cofactor is heme c.

The protein localises to the plastid. The protein resides in the chloroplast thylakoid membrane. Functionally, component of the cytochrome b6-f complex, which mediates electron transfer between photosystem II (PSII) and photosystem I (PSI), cyclic electron flow around PSI, and state transitions. The protein is Cytochrome b6 of Adiantum capillus-veneris (Maidenhair fern).